Consider the following 395-residue polypeptide: Allantoicase (395 aa).

The protein belongs to the allantoicase family.

The enzyme catalyses allantoate + H2O = (S)-ureidoglycolate + urea. It participates in nitrogen metabolism; (S)-allantoin degradation; (S)-ureidoglycolate from allantoate (aminidohydrolase route): step 1/1. Functionally, utilization of purines as secondary nitrogen sources, when primary sources are limiting. This is Allantoicase (allc) from Danio rerio (Zebrafish).